The chain runs to 255 residues: Cell division protein ZapD (255 aa).

Belongs to the ZapD family. As to quaternary structure, interacts with FtsZ.

The protein resides in the cytoplasm. In terms of biological role, cell division factor that enhances FtsZ-ring assembly. Directly interacts with FtsZ and promotes bundling of FtsZ protofilaments, with a reduction in FtsZ GTPase activity. The polypeptide is Cell division protein ZapD (Methylococcus capsulatus (strain ATCC 33009 / NCIMB 11132 / Bath)).